Reading from the N-terminus, the 334-residue chain is Serine/Arginine-related protein 53 (334 aa).

Positions 1-13 are enriched in basic and acidic residues; sequence MGRRSSDTEEESR. Disordered stretches follow at residues 1 to 179, 201 to 220, and 243 to 290; these read MGRR…HLPP, LKAK…EDQA, and QTFR…SIPT. Composition is skewed to basic residues over residues 14–24 and 35–50; these read SKRKKKHRRRS and YSRK…KSRS. Basic and acidic residues predominate over residues 51-62; it reads WSRDLQPRSHSY. Basic residues predominate over residues 78-118; that stretch reads SRRKRSRSRSRGRGKSYRVQRSRSKSRTRRSRSRPRLRSHS. Basic and acidic residues-rich tracts occupy residues 132-166, 201-218, and 247-259; these read RSRD…KRGE, LKAK…KEED, and SSKE…EPSE. A coiled-coil region spans residues 180–236; sequence AEQAKARLQLVLEAAAKADEALKAKERNEEEAKRRKEEDQATLVEQVKRVKEIEAIE.

In terms of assembly, interacts (via Arg/Ser-rich domain) with LUC7L3, RBM39 and RSF1. Phosphorylated. In terms of tissue distribution, widely expressed. Expressed in brain, spinal cord, cerebellum.

The protein resides in the nucleus. It is found in the nucleus speckle. It localises to the cytoplasm. In terms of biological role, has a role in alternative splicing and transcription regulation. Involved in both constitutive and alternative pre-mRNA splicing. May have a role in the recognition of the 3' splice site during the second step of splicing. In Homo sapiens (Human), this protein is Serine/Arginine-related protein 53 (RSRC1).